Consider the following 486-residue polypeptide: uncharacterized protein (486 aa).

The first 25 residues, 1 to 25, serve as a signal peptide directing secretion; that stretch reads MGTMRSVYLIIIIILFFAFISLSFG. 2 stretches are compositionally biased toward basic and acidic residues: residues 306 to 316 and 326 to 349; these read KKEEKENEESS and KKEE…KQEK. The segment at 306-349 is disordered; it reads KKEEKENEESSKTINQMQRHKKEEKSQTQETKKPSKNEMNKQEK.

This is an uncharacterized protein from Methanocaldococcus jannaschii (strain ATCC 43067 / DSM 2661 / JAL-1 / JCM 10045 / NBRC 100440) (Methanococcus jannaschii).